We begin with the raw amino-acid sequence, 272 residues long: Tropinone reductase-like 1 (272 aa).

Residue I17–V41 coordinates NAD(+). S150 contacts substrate. Y163 serves as the catalytic Proton acceptor.

Belongs to the short-chain dehydrogenases/reductases (SDR) family.

Functionally, has no tropinone reductase activity. The chain is Tropinone reductase-like 1 from Erythroxylum coca (Coca plant).